Reading from the N-terminus, the 561-residue chain is 3beta-hydroxysteroid-dehydrogenase/decarboxylase isoform 3 (561 aa).

Lys-166 serves as a coordination point for NAD(+). The region spanning 379-561 is the Reticulon domain; it reads VADILLWRNE…SDASSKPMFM (183 aa). 3 helical membrane passes run 392–412, 420–440, and 504–524; these read FVSFLVLNLFYYWFFFSGNTF, LFIFAVALYGVSFVPSKIFGF, and SLAAFLFTVMSFSFTGFFIYE.

The protein belongs to the 3-beta-HSD family.

Its subcellular location is the endoplasmic reticulum membrane. The enzyme catalyses a 3beta-hydroxysteroid-4alpha-carboxylate + NADP(+) = a 3-oxosteroid + CO2 + NADPH. The catalysed reaction is a 3beta-hydroxysteroid-4alpha-carboxylate + NAD(+) = a 3-oxosteroid + CO2 + NADH. Its pathway is steroid biosynthesis; zymosterol biosynthesis; zymosterol from lanosterol: step 4/6. This is 3beta-hydroxysteroid-dehydrogenase/decarboxylase isoform 3 (3BETAHSD/D3) from Arabidopsis thaliana (Mouse-ear cress).